The primary structure comprises 102 residues: Small ribosomal subunit protein uS10 (102 aa).

It belongs to the universal ribosomal protein uS10 family. In terms of assembly, part of the 30S ribosomal subunit.

Its function is as follows. Involved in the binding of tRNA to the ribosomes. This chain is Small ribosomal subunit protein uS10, found in Staphylococcus saprophyticus subsp. saprophyticus (strain ATCC 15305 / DSM 20229 / NCIMB 8711 / NCTC 7292 / S-41).